The chain runs to 162 residues: UPF0305 protein MMP0665 (162 aa).

The protein belongs to the UPF0305 family.

The polypeptide is UPF0305 protein MMP0665 (Methanococcus maripaludis (strain DSM 14266 / JCM 13030 / NBRC 101832 / S2 / LL)).